The primary structure comprises 273 residues: 2,3,4,5-tetrahydropyridine-2,6-dicarboxylate N-succinyltransferase (273 aa).

Substrate-binding residues include arginine 104 and aspartate 141.

The protein belongs to the transferase hexapeptide repeat family. In terms of assembly, homotrimer.

Its subcellular location is the cytoplasm. It catalyses the reaction (S)-2,3,4,5-tetrahydrodipicolinate + succinyl-CoA + H2O = (S)-2-succinylamino-6-oxoheptanedioate + CoA. Its pathway is amino-acid biosynthesis; L-lysine biosynthesis via DAP pathway; LL-2,6-diaminopimelate from (S)-tetrahydrodipicolinate (succinylase route): step 1/3. In Psychrobacter cryohalolentis (strain ATCC BAA-1226 / DSM 17306 / VKM B-2378 / K5), this protein is 2,3,4,5-tetrahydropyridine-2,6-dicarboxylate N-succinyltransferase.